The sequence spans 101 residues: A-type ATP synthase subunit K (101 aa).

3 helical membrane-spanning segments follow: residues 4–24, 32–52, and 75–95; these read ALLI…AAQA, FMGI…GAGV, and VLIF…FAVL.

Belongs to the V-ATPase proteolipid subunit family. Has multiple subunits with at least A(3), B(3), C, D, E, F, H, I and proteolipid K(x).

It localises to the cell membrane. Its function is as follows. Component of the A-type ATP synthase that produces ATP from ADP in the presence of a proton gradient across the membrane. This chain is A-type ATP synthase subunit K, found in Sulfolobus acidocaldarius (strain ATCC 33909 / DSM 639 / JCM 8929 / NBRC 15157 / NCIMB 11770).